The following is a 421-amino-acid chain: Serine--tRNA ligase (421 aa).

229–231 (TSE) is a binding site for L-serine. Residues 260 to 262 (RKE) and valine 276 each bind ATP. Glutamate 283 contributes to the L-serine binding site. 347-350 (EIVS) contacts ATP. Threonine 383 is a binding site for L-serine.

This sequence belongs to the class-II aminoacyl-tRNA synthetase family. Type-1 seryl-tRNA synthetase subfamily. Homodimer. The tRNA molecule binds across the dimer.

It localises to the cytoplasm. The enzyme catalyses tRNA(Ser) + L-serine + ATP = L-seryl-tRNA(Ser) + AMP + diphosphate + H(+). The catalysed reaction is tRNA(Sec) + L-serine + ATP = L-seryl-tRNA(Sec) + AMP + diphosphate + H(+). It participates in aminoacyl-tRNA biosynthesis; selenocysteinyl-tRNA(Sec) biosynthesis; L-seryl-tRNA(Sec) from L-serine and tRNA(Sec): step 1/1. Catalyzes the attachment of serine to tRNA(Ser). Is also able to aminoacylate tRNA(Sec) with serine, to form the misacylated tRNA L-seryl-tRNA(Sec), which will be further converted into selenocysteinyl-tRNA(Sec). This is Serine--tRNA ligase from Nitrosopumilus maritimus (strain SCM1).